The primary structure comprises 160 residues: Transcription factor 12 (160 aa).

The disordered stretch occupies residues 1–58 (NKEKDENLHEPPSSDDMKSDDESSQKDIKVSSRGRTSTNEDEDLNPEQKIEREKERRM). Residues 15–30 (DDMKSDDESSQKDIKV) show a composition bias toward basic and acidic residues. Position 19 is a phosphoserine (S19). K29 participates in a covalent cross-link: Glycyl lysine isopeptide (Lys-Gly) (interchain with G-Cter in SUMO2). A Phosphothreonine modification is found at T36. Position 37 is a phosphoserine (S37). Residues 46–58 (PEQKIEREKERRM) are compositionally biased toward basic and acidic residues. The bHLH domain occupies 55–108 (ERRMANNARERLRVRDINEAFKELGRMCQLHLKSEKPQTKLLILHQAVAVILSL). Glycyl lysine isopeptide (Lys-Gly) (interchain with G-Cter in SUMO2) cross-links involve residues K87 and K131. The segment at 110–133 (QQVRERNLNPKAACLKRREEEKVS) is class A specific domain. The segment at 132–160 (VSVVSAEPPTTLPGTHPGLSETTNPMGHM) is disordered. Low complexity predominate over residues 139-150 (PPTTLPGTHPGL). The span at 151 to 160 (SETTNPMGHM) shows a compositional bias: polar residues.

Efficient DNA binding requires dimerization with another bHLH protein. Forms homo- or heterooligomers with myogenin, E12 and ITF2 proteins. Interacts with PTF1A. Interacts with RUNX1T1. Interacts with NEUROD2. Interacts with BHLHA9.

It localises to the nucleus. Its function is as follows. Transcriptional regulator. Involved in the initiation of neuronal differentiation. Activates transcription by binding to the E box (5'-CANNTG-3'). May be involved in the functional network that regulates the development of the GnRH axis. In Papio hamadryas (Hamadryas baboon), this protein is Transcription factor 12 (TCF12).